Reading from the N-terminus, the 303-residue chain is Hemolysin E (303 aa).

The cysteines at positions 87 and 285 are disulfide-linked. Residues 179 to 199 (AGAAAGIVAGPFGLIISYSIA) form a helical membrane-spanning segment.

This sequence belongs to the hemolysin E family. In terms of assembly, monomer and oligomer. In periplasm, it is present as a monomer, while in outer membrane vesicles, it oligomerizes to form a pore structure that is active. The pore is formed by a dodecamer. In terms of processing, in periplasm, it forms a disulfide bond, which prevents the oligomerization. In outer membrane vesicles, the redox status prevents formation of the disulfide bond, leading to oligomerization and pore formation.

The protein localises to the secreted. It localises to the periplasm. The protein resides in the host cell membrane. Toxin, which has some hemolytic activity towards mammalian cells. Acts by forming a pore-like structure upon contact with mammalian cells. This Salmonella typhi protein is Hemolysin E (hlyE).